Here is a 121-residue protein sequence, read N- to C-terminus: uncharacterized protein (121 aa).

The helical transmembrane segment at 11 to 31 (IFQFFVFPFYYFLLIITEIGF) threads the bilayer.

Its subcellular location is the membrane. This is an uncharacterized protein from Schizosaccharomyces pombe (strain 972 / ATCC 24843) (Fission yeast).